Here is a 300-residue protein sequence, read N- to C-terminus: UDP-N-acetylenolpyruvoylglucosamine reductase (300 aa).

One can recognise an FAD-binding PCMH-type domain in the interval 22 to 190; it reads RVGGAAEWLA…LSARFRLQPG (169 aa). The active site involves Arg-169. Residue Ser-220 is the Proton donor of the active site. Residue Glu-290 is part of the active site.

The protein belongs to the MurB family. FAD is required as a cofactor.

It is found in the cytoplasm. The catalysed reaction is UDP-N-acetyl-alpha-D-muramate + NADP(+) = UDP-N-acetyl-3-O-(1-carboxyvinyl)-alpha-D-glucosamine + NADPH + H(+). It functions in the pathway cell wall biogenesis; peptidoglycan biosynthesis. Functionally, cell wall formation. This is UDP-N-acetylenolpyruvoylglucosamine reductase from Synechococcus sp. (strain CC9605).